Here is a 308-residue protein sequence, read N- to C-terminus: Methionine synthase (308 aa).

Residues H192, C194, E215, and C282 each contribute to the Zn(2+) site.

It belongs to the archaeal MetE family. Requires Zn(2+) as cofactor.

The protein operates within amino-acid biosynthesis; L-methionine biosynthesis via de novo pathway. In terms of biological role, catalyzes the transfer of a methyl group to L-homocysteine resulting in methionine formation. Can use methylcobalamin and methylcobinamide as methyl donors, but methylcobalamin is not considered to be the physiological substrate. The sequence is that of Methionine synthase from Methanocaldococcus jannaschii (strain ATCC 43067 / DSM 2661 / JAL-1 / JCM 10045 / NBRC 100440) (Methanococcus jannaschii).